The sequence spans 950 residues: Kinase suppressor of Ras 2 (950 aa).

A disordered region spans residues 239-296 (PPLESGHRSLPPSPRQRHAVRTPPRTPNIVTTVTPPGTPPMRKKNKLKPPGTPPPSSR). Over residues 259-273 (RTPPRTPNIVTTVTP) the composition is skewed to low complexity. 2 positions are modified to phosphothreonine: Thr272 and Thr276. Residues 412-456 (KHRFSTKYWMSQTCTVCGKGMLFGLKCKNCKLKCHNKCTKEAPPC) form a Phorbol-ester/DAG-type zinc finger. Zn(2+)-binding residues include His413, Cys425, Cys428, Cys438, Cys441, His446, Cys449, and Cys456. Residue Ser474 is modified to Phosphoserine; by MARK3. Thr497 bears the Phosphothreonine mark. The interval 498 to 556 (LPKTNKINKDHIPVPYQPDSSSNPSSTTSSTPSSPAPPLPPSATPPSPLHPSPQCTRQQ) is disordered. Over residues 517–530 (SSSNPSSTTSSTPS) the composition is skewed to low complexity. Positions 531-548 (SPAPPLPPSATPPSPLHP) are enriched in pro residues. Residues 666–931 (LEIGELIGKG…TKLMDMLEKL (266 aa)) enclose the Protein kinase domain. 672–680 (IGKGRFGQV) serves as a coordination point for ATP. Asp786 (proton donor/acceptor) is an active-site residue. Positions 788 and 803 each coordinate ATP.

This sequence belongs to the protein kinase superfamily. TKL Ser/Thr protein kinase family. As to quaternary structure, heterodimerizes (via N-terminus) with BRAF (via N-terminus) in a MAP2K1/MEK1-dependent manner. Interacts with BRAF; this increases the low intrinsic protein kinase activity of KSR2. Interacts with MAP2K1, forming a heterodimer that can dimerize to form a heterotetramer. Interacts with MAP3K8, MAPK, RAS and RAF. In terms of processing, phosphorylated on Ser-474 by MARK3. As to expression, mainly expressed in brain and kidney.

The protein localises to the cytoplasm. The protein resides in the membrane. It catalyses the reaction L-seryl-[protein] + ATP = O-phospho-L-seryl-[protein] + ADP + H(+). The enzyme catalyses L-threonyl-[protein] + ATP = O-phospho-L-threonyl-[protein] + ADP + H(+). Its activity is regulated as follows. Kinase activity is inhibited by ASC24. Functionally, location-regulated scaffold connecting MEK to RAF. Has very low protein kinase activity and can phosphorylate MAP2K1 at several Ser and Thr residues with very low efficiency (in vitro). Acts as MAP2K1/MEK1-dependent allosteric activator of BRAF; upon binding to MAP2K1/MEK1, dimerizes with BRAF and promotes BRAF-mediated phosphorylation of MAP2K1/MEK1. Interaction with BRAF enhances KSR2-mediated phosphorylation of MAP2K1 (in vitro). Blocks MAP3K8 kinase activity and MAP3K8-mediated signaling. Acts as a negative regulator of MAP3K3-mediated activation of ERK, JNK and NF-kappa-B pathways, inhibiting MAP3K3-mediated interleukin-8 production. The sequence is that of Kinase suppressor of Ras 2 from Homo sapiens (Human).